Here is a 714-residue protein sequence, read N- to C-terminus: Polyribonucleotide nucleotidyltransferase (714 aa).

Mg(2+) is bound by residues aspartate 489 and aspartate 495. The KH domain occupies 556–615; the sequence is PKIDTIKIDVDKIKVVIGKGGETIDKIIAETGVKIDIDEEGNVSIYSSDQDAINRAKEII. The region spanning 625 to 693 is the S1 motif domain; it reads GEVYHAKVVR…DKGRIDASMK (69 aa). A disordered region spans residues 691–714; it reads SMKALVPRPPKPEKSEAKKEGKHD. Basic and acidic residues predominate over residues 700 to 714; sequence PKPEKSEAKKEGKHD.

The protein belongs to the polyribonucleotide nucleotidyltransferase family. The cofactor is Mg(2+).

It localises to the cytoplasm. The catalysed reaction is RNA(n+1) + phosphate = RNA(n) + a ribonucleoside 5'-diphosphate. Its function is as follows. Involved in mRNA degradation. Catalyzes the phosphorolysis of single-stranded polyribonucleotides processively in the 3'- to 5'-direction. This Streptococcus equi subsp. zooepidemicus (strain H70) protein is Polyribonucleotide nucleotidyltransferase.